The primary structure comprises 284 residues: Bifunctional protein FolD (284 aa).

Residues 166-168 (GAS), Ser191, and Ile232 each bind NADP(+).

The protein belongs to the tetrahydrofolate dehydrogenase/cyclohydrolase family. Homodimer.

It catalyses the reaction (6R)-5,10-methylene-5,6,7,8-tetrahydrofolate + NADP(+) = (6R)-5,10-methenyltetrahydrofolate + NADPH. The catalysed reaction is (6R)-5,10-methenyltetrahydrofolate + H2O = (6R)-10-formyltetrahydrofolate + H(+). Its pathway is one-carbon metabolism; tetrahydrofolate interconversion. Catalyzes the oxidation of 5,10-methylenetetrahydrofolate to 5,10-methenyltetrahydrofolate and then the hydrolysis of 5,10-methenyltetrahydrofolate to 10-formyltetrahydrofolate. This Neisseria meningitidis serogroup C (strain 053442) protein is Bifunctional protein FolD.